Consider the following 105-residue polypeptide: Heat shock protein HspQ (105 aa).

The protein belongs to the HspQ family.

It is found in the cytoplasm. Functionally, involved in the degradation of certain denaturated proteins, including DnaA, during heat shock stress. This Yersinia enterocolitica serotype O:8 / biotype 1B (strain NCTC 13174 / 8081) protein is Heat shock protein HspQ.